The following is a 459-amino-acid chain: Phosphoglucosamine mutase (459 aa).

Ser105 (phosphoserine intermediate) is an active-site residue. Positions 105, 252, 254, and 256 each coordinate Mg(2+). Ser105 carries the phosphoserine modification.

Belongs to the phosphohexose mutase family. It depends on Mg(2+) as a cofactor. Activated by phosphorylation.

The catalysed reaction is alpha-D-glucosamine 1-phosphate = D-glucosamine 6-phosphate. Catalyzes the conversion of glucosamine-6-phosphate to glucosamine-1-phosphate. The sequence is that of Phosphoglucosamine mutase from Bifidobacterium adolescentis (strain ATCC 15703 / DSM 20083 / NCTC 11814 / E194a).